A 109-amino-acid chain; its full sequence is Cytochrome c6 (109 aa).

The first 25 residues, 1 to 25 (MFKNIIIVVAVTLCALFTNEHVVYS), serve as a signal peptide directing secretion. 4 residues coordinate heme c: Cys39, Cys42, His43, and Met83.

This sequence belongs to the cytochrome c family. PetJ subfamily. As to quaternary structure, monomer. Post-translationally, binds 1 heme c group covalently per subunit.

It is found in the plastid. The protein resides in the chloroplast thylakoid lumen. Functionally, functions as an electron carrier between membrane-bound cytochrome b6-f and photosystem I in oxygenic photosynthesis. This is Cytochrome c6 (petJ) from Cyanidium caldarium (Red alga).